The sequence spans 452 residues: Mitochondrial distribution and morphology protein 34 (452 aa).

Residues 1 to 196 (MSFRVKGWSD…LPSIIYKMSR (196 aa)) enclose the SMP-LTD domain.

Belongs to the MDM34 family. Component of the ER-mitochondria encounter structure (ERMES) or MDM complex, composed of mmm1, mdm10, mdm12 and mdm34.

The protein localises to the mitochondrion outer membrane. Component of the ERMES/MDM complex, which serves as a molecular tether to connect the endoplasmic reticulum (ER) and mitochondria. Components of this complex are involved in the control of mitochondrial shape and protein biogenesis, and function in nonvesicular lipid trafficking between the ER and mitochondria. Mdm34 is required for the interaction of the ER-resident membrane protein mmm1 and the outer mitochondrial membrane-resident beta-barrel protein mdm10. The protein is Mitochondrial distribution and morphology protein 34 of Schizosaccharomyces pombe (strain 972 / ATCC 24843) (Fission yeast).